The sequence spans 1005 residues: Translation initiation factor IF-2 (1005 aa).

Disordered regions lie at residues 54-337 (KYVP…RRPQ) and 368-414 (PKPK…PTSV). Residues 58–73 (SPSTHSMPPTRPTSHS) show a composition bias toward polar residues. Over residues 75–86 (PLPPQPGKPQPK) the composition is skewed to pro residues. Residues 146–157 (GSNSPSHSESTP) show a composition bias toward polar residues. Low complexity-rich tracts occupy residues 189-198 (PSPAAMAGRA) and 222-240 (VESA…PRAE). Over residues 258-274 (PRSETSEDGARRGEKLV) the composition is skewed to basic and acidic residues. Positions 392–401 (GGRKLSRRDR) are enriched in basic residues. In terms of domain architecture, tr-type G spans 495 to 668 (RRPPVVTIMG…LLVSEVEDLY (174 aa)). The tract at residues 504-511 (GHVDHGKT) is G1. 504–511 (GHVDHGKT) contacts GTP. The G2 stretch occupies residues 529 to 533 (GITQH). A G3 region spans residues 554-557 (DTPG). GTP-binding positions include 554-558 (DTPGH) and 608-611 (NKID). Positions 608–611 (NKID) are G4. The interval 644–646 (SAI) is G5.

This sequence belongs to the TRAFAC class translation factor GTPase superfamily. Classic translation factor GTPase family. IF-2 subfamily.

Its subcellular location is the cytoplasm. Functionally, one of the essential components for the initiation of protein synthesis. Protects formylmethionyl-tRNA from spontaneous hydrolysis and promotes its binding to the 30S ribosomal subunits. Also involved in the hydrolysis of GTP during the formation of the 70S ribosomal complex. This chain is Translation initiation factor IF-2, found in Cyanothece sp. (strain PCC 7425 / ATCC 29141).